Here is a 531-residue protein sequence, read N- to C-terminus: Serine-type carboxypeptidase F (531 aa).

A signal peptide spans 1 to 25 (MLFRSLLSTAVLAVSLCTDNASAAK). Asparagine 20 is a glycosylation site (N-linked (GlcNAc...) asparagine). Residues 26–52 (HGRFGQKARDAMNIAKRSANAVKHSLK) constitute a propeptide that is removed on maturation. Residues asparagine 63, asparagine 94, and asparagine 155 are each glycosylated (N-linked (GlcNAc...) asparagine). Serine 211 is an active-site residue. N-linked (GlcNAc...) asparagine glycans are attached at residues asparagine 228, asparagine 271, asparagine 309, and asparagine 378. The active site involves aspartate 430. N-linked (GlcNAc...) asparagine glycosylation is found at asparagine 436 and asparagine 444. Histidine 507 is an active-site residue.

It belongs to the peptidase S10 family. In terms of assembly, monomer.

With respect to regulation, inhibited by DFP, and Hg(Cl)2. In terms of biological role, removes any amino acid from the C-terminus of a long peptide. Digests preferentially peptides containing a positively charged residue in P1' position, as well as arginine, lysine or phenylalanine in P1 position of ester substrate. Also catalyzes peptide synthesis. This chain is Serine-type carboxypeptidase F (pepF), found in Aspergillus niger.